The chain runs to 512 residues: Polyamine aminopropyltransferase (512 aa).

The next 7 helical transmembrane spans lie at 19-39 (IVSICGIIFEVLFGALGSYIL), 48-68 (LTISLFLTGMGIGASLSEKFM), 76-96 (VWIEFCVALIGGFSSFIMFGI), 108-128 (YLYSITLIIGALTGVELPILI), 151-171 (AGGLIGGVLFVFLFRPYFGMV), 172-192 (KTAFLVGLINLTVALIVLWLF), and 199-219 (FIVHAVIGGVIGVLLIAGLFF). One can recognise a PABS domain in the interval 215–450 (AGLFFGEEMA…GNWGFVMASR (236 aa)). A spermidine synthase region spans residues 217-457 (LFFGEEMAFN…ASREEIDLDI (241 aa)). Gln-245 contacts S-methyl-5'-thioadenosine. 2 residues coordinate spermidine: His-275 and Asp-299. S-methyl-5'-thioadenosine is bound by residues Asp-319 and 353-354 (DA). The active-site Proton acceptor is Asp-371.

This sequence belongs to the spermidine/spermine synthase family. As to quaternary structure, homodimer or homotetramer.

Its subcellular location is the cell membrane. The enzyme catalyses S-adenosyl 3-(methylsulfanyl)propylamine + putrescine = S-methyl-5'-thioadenosine + spermidine + H(+). It functions in the pathway amine and polyamine biosynthesis; spermidine biosynthesis; spermidine from putrescine: step 1/1. Functionally, catalyzes the irreversible transfer of a propylamine group from the amino donor S-adenosylmethioninamine (decarboxy-AdoMet) to putrescine (1,4-diaminobutane) to yield spermidine. In Oceanobacillus iheyensis (strain DSM 14371 / CIP 107618 / JCM 11309 / KCTC 3954 / HTE831), this protein is Polyamine aminopropyltransferase.